We begin with the raw amino-acid sequence, 355 residues long: UDP-N-acetylglucosamine--N-acetylmuramyl-(pentapeptide) pyrophosphoryl-undecaprenol N-acetylglucosamine transferase (355 aa).

Residues 12–14, Asn124, Arg160, Ser192, Ile243, 262–267, and Gln287 each bind UDP-N-acetyl-alpha-D-glucosamine; these read TGG and ALTVCE.

This sequence belongs to the glycosyltransferase 28 family. MurG subfamily.

Its subcellular location is the cell inner membrane. The enzyme catalyses di-trans,octa-cis-undecaprenyl diphospho-N-acetyl-alpha-D-muramoyl-L-alanyl-D-glutamyl-meso-2,6-diaminopimeloyl-D-alanyl-D-alanine + UDP-N-acetyl-alpha-D-glucosamine = di-trans,octa-cis-undecaprenyl diphospho-[N-acetyl-alpha-D-glucosaminyl-(1-&gt;4)]-N-acetyl-alpha-D-muramoyl-L-alanyl-D-glutamyl-meso-2,6-diaminopimeloyl-D-alanyl-D-alanine + UDP + H(+). The protein operates within cell wall biogenesis; peptidoglycan biosynthesis. Cell wall formation. Catalyzes the transfer of a GlcNAc subunit on undecaprenyl-pyrophosphoryl-MurNAc-pentapeptide (lipid intermediate I) to form undecaprenyl-pyrophosphoryl-MurNAc-(pentapeptide)GlcNAc (lipid intermediate II). The chain is UDP-N-acetylglucosamine--N-acetylmuramyl-(pentapeptide) pyrophosphoryl-undecaprenol N-acetylglucosamine transferase from Haemophilus ducreyi (strain 35000HP / ATCC 700724).